Reading from the N-terminus, the 1615-residue chain is ABC transporter A family member 4 (1615 aa).

A run of 7 helical transmembrane segments spans residues 30–50 (ILLP…SMII), 233–253 (GVFI…NIVI), 278–298 (SIIS…ILSA), 308–328 (ITLI…AFIL), 337–357 (YAGL…IIIG), 365–385 (LKLL…YVWC), and 405–425 (YEII…LWYL). The ABC transmembrane type-2 domain occupies 182–383 (TQIQTGVDQA…PIAISVANYV (202 aa)). Positions 492–727 (ISIRNLRKEF…FGVGYLLTIS (236 aa)) constitute an ABC transporter 1 domain. Residue 528–535 (GPNGSGKS) participates in ATP binding. 7 consecutive transmembrane segments (helical) span residues 855–875 (IKSF…GLIL), 1022–1042 (FVAI…IAAS), 1075–1095 (IWDY…IIAV), 1106–1126 (YISG…LMSF), 1135–1155 (VGAI…ISFI), 1174–1194 (IIEY…ILAI), and 1218–1238 (LLPN…ILLI). Positions 1293–1528 (IIFNNLYKKF…FGSGYSIEVK (236 aa)) constitute an ABC transporter 2 domain. 1331 to 1338 (GLNGCGKS) is a binding site for ATP.

This sequence belongs to the ABC transporter superfamily. ABCA family.

The protein resides in the membrane. In Dictyostelium discoideum (Social amoeba), this protein is ABC transporter A family member 4 (abcA4).